Here is a 229-residue protein sequence, read N- to C-terminus: Endonuclease V (229 aa).

The Mg(2+) site is built by D46 and D114.

This sequence belongs to the endonuclease V family. Mg(2+) serves as cofactor.

The protein localises to the cytoplasm. It catalyses the reaction Endonucleolytic cleavage at apurinic or apyrimidinic sites to products with a 5'-phosphate.. Its function is as follows. DNA repair enzyme involved in the repair of deaminated bases. Selectively cleaves double-stranded DNA at the second phosphodiester bond 3' to a deoxyinosine leaving behind the intact lesion on the nicked DNA. This is Endonuclease V from Streptomyces avermitilis (strain ATCC 31267 / DSM 46492 / JCM 5070 / NBRC 14893 / NCIMB 12804 / NRRL 8165 / MA-4680).